Here is a 63-residue protein sequence, read N- to C-terminus: Sec-independent protein translocase protein TatA (63 aa).

The chain crosses the membrane as a helical span at residues 1 to 21 (MGSLSMWHWLIVLVIVLLLFG). The disordered stretch occupies residues 43–63 (MTDEDAPETAKTVDHKADETK). Positions 53-63 (KTVDHKADETK) are enriched in basic and acidic residues.

The protein belongs to the TatA/E family. In terms of assembly, the Tat system comprises two distinct complexes: a TatABC complex, containing multiple copies of TatA, TatB and TatC subunits, and a separate TatA complex, containing only TatA subunits. Substrates initially bind to the TatABC complex, which probably triggers association of the separate TatA complex to form the active translocon.

The protein resides in the cell inner membrane. Functionally, part of the twin-arginine translocation (Tat) system that transports large folded proteins containing a characteristic twin-arginine motif in their signal peptide across membranes. TatA could form the protein-conducting channel of the Tat system. In Rhizobium etli (strain ATCC 51251 / DSM 11541 / JCM 21823 / NBRC 15573 / CFN 42), this protein is Sec-independent protein translocase protein TatA.